The chain runs to 462 residues: Keratin, type I cytoskeletal 28 (462 aa).

A disordered region spans residues 1–26 (MSLRFSGGSRHVGIQSGSLRPPSGGA). A head region spans residues 1–83 (MSLRFSGGSR…GSEGGLLSGN (83 aa)). Residues 84–119 (EKVTMQNLNNRLASYLDNVKALEEANSELERKIKTW) form a coil 1A region. The IF rod domain maps to 84–399 (EKVTMQNLNN…RLIDGDENSC (316 aa)). Residues 120 to 141 (HEKYGPGSCRGLDRDYSKYHLT) are linker 1. The tract at residues 142–233 (IEDLKSKIIS…KNHEEEMKVL (92 aa)) is coil 1B. Positions 234–256 (QCAAGGNVNVEMNAAPGVDLTVL) are linker 12. A coil 2 region spans residues 257–395 (LNNMRAEYEA…ETYCRLIDGD (139 aa)). A tail region spans residues 396-462 (ENSCSVSKGF…NGKAEQRVPF (67 aa)).

It belongs to the intermediate filament family. Heterotetramer of two type I and two type II keratins. As to expression, in the hair follicle and bulb, uniformly expressed in all three layers of the inner root sheath (the Henle layer, the Huxley layer and the cuticle) and observed in matrix cells (at protein level).

It localises to the cytoplasm. Functionally, essential for the proper assembly of types I and II keratin protein complexes and the formation of keratin intermediate filaments in the inner root sheath (irs). This Mus musculus (Mouse) protein is Keratin, type I cytoskeletal 28.